Here is a 386-residue protein sequence, read N- to C-terminus: Threonine--tRNA ligase editing subunit (386 aa).

The protein belongs to the class-II aminoacyl-tRNA synthetase family. Archaea-specific ThrRS editing domain subfamily. In terms of assembly, probably interacts with its catalytic subunit (AC Q97VW8); a subunit fusion (in the order edit-catalytic) is fully functional.

Its subcellular location is the cytoplasm. Freestanding tRNA editing subunit of threonine--tRNA ligase, the catalytic subunit is AC Q97VW8. Deacylates (edits) mischarged L-seryl-tRNA(Thr) in trans, removing L-serine, has no aminoacylation activity. In vitro when both subunits are present, or if the 2 subunits are fused, L-seryl-tRNA(Thr) is no longer produced. Has no activity on correctly acylated L-seryl-tRNA(Ser) or L-threonyl-tRNA(Thr). Editing is probably catalyzed by the 2'-OH of A76 of tRNA(Thr). This chain is Threonine--tRNA ligase editing subunit, found in Saccharolobus solfataricus (strain ATCC 35092 / DSM 1617 / JCM 11322 / P2) (Sulfolobus solfataricus).